Here is a 250-residue protein sequence, read N- to C-terminus: Probable transcriptional regulatory protein Plut_1643 (250 aa).

This sequence belongs to the TACO1 family.

It is found in the cytoplasm. The sequence is that of Probable transcriptional regulatory protein Plut_1643 from Chlorobium luteolum (strain DSM 273 / BCRC 81028 / 2530) (Pelodictyon luteolum).